Consider the following 163-residue polypeptide: Peptidyl-prolyl cis-trans isomerase FKBP15-2 (163 aa).

A signal peptide spans 1–25; it reads MASKMSLRYSLFLIFFSLISLQGFA. The PPIase FKBP-type domain maps to 52–140; it reads GDTIKVHYRG…IFDTELIAVN (89 aa). Residues 142–163 are disordered; it reads KPAGGEEYGGDEDDEGYGNDEL. Residues 149–163 are compositionally biased toward acidic residues; that stretch reads YGGDEDDEGYGNDEL. The Prevents secretion from ER signature appears at 160–163; sequence NDEL.

Belongs to the FKBP-type PPIase family.

The protein localises to the endoplasmic reticulum lumen. The enzyme catalyses [protein]-peptidylproline (omega=180) = [protein]-peptidylproline (omega=0). In terms of biological role, PPIases accelerate the folding of proteins. It catalyzes the cis-trans isomerization of proline imidic peptide bonds in oligopeptides. The sequence is that of Peptidyl-prolyl cis-trans isomerase FKBP15-2 (FKBP15-2) from Arabidopsis thaliana (Mouse-ear cress).